Here is a 352-residue protein sequence, read N- to C-terminus: Putative pectinesterase 11 (352 aa).

The chain crosses the membrane as a helical span at residues A13–A35. An N-linked (GlcNAc...) asparagine glycan is attached at N76. D175 functions as the Proton donor in the catalytic mechanism. D196 acts as the Nucleophile in catalysis. N218 carries N-linked (GlcNAc...) asparagine glycosylation. Substrate is bound by residues R252 and W254. A disordered region spans residues L332–N352. Residues P343–N352 are compositionally biased toward polar residues.

It belongs to the pectinesterase family.

The protein localises to the membrane. It carries out the reaction [(1-&gt;4)-alpha-D-galacturonosyl methyl ester](n) + n H2O = [(1-&gt;4)-alpha-D-galacturonosyl](n) + n methanol + n H(+). The protein operates within glycan metabolism; pectin degradation; 2-dehydro-3-deoxy-D-gluconate from pectin: step 1/5. Functionally, acts in the modification of cell walls via demethylesterification of cell wall pectin. In Arabidopsis thaliana (Mouse-ear cress), this protein is Putative pectinesterase 11 (PME11).